A 177-amino-acid polypeptide reads, in one-letter code: Ribosome maturation factor RimM (177 aa).

The PRC barrel domain maps to 100 to 177; that stretch reads EDEYYWSDLV…TVLVAWPSDY (78 aa).

This sequence belongs to the RimM family. As to quaternary structure, binds ribosomal protein uS19.

It localises to the cytoplasm. Functionally, an accessory protein needed during the final step in the assembly of 30S ribosomal subunit, possibly for assembly of the head region. Essential for efficient processing of 16S rRNA. May be needed both before and after RbfA during the maturation of 16S rRNA. It has affinity for free ribosomal 30S subunits but not for 70S ribosomes. The protein is Ribosome maturation factor RimM of Psychrobacter cryohalolentis (strain ATCC BAA-1226 / DSM 17306 / VKM B-2378 / K5).